We begin with the raw amino-acid sequence, 213 residues long: Heterochromatin protein 1 (213 aa).

Disordered stretches follow at residues 1–24 (MGKKTDNPETNNASSGAEEEEEEY) and 74–151 (RKDE…TGFD). The region spanning 24 to 82 (YAVEKILDRRVRKGKVEYYLKWKGYAETENTWEPEGNLDCQDLIQQYELSRKDEANAAA) is the Chromo 1 domain. The segment covering 89–104 (SKKERPGSSTKVKETG) has biased composition (basic and acidic residues). Positions 105–115 (RTSTTASNSSG) are enriched in polar residues. Positions 154–212 (LEAEKILGASDNNGRLTFLIQFKGVDQAEMVPSTVANVKIPQMVIRFYEERLSWYSDNE) constitute a Chromo 2 domain.

Its subcellular location is the nucleus. Structural component of heterochromatin, involved in gene repression and the modification of position-effect-variegation. Recognizes and binds histone H3 tails methylated at 'Lys-9', leading to epigenetic repression. The polypeptide is Heterochromatin protein 1 (HP1A) (Drosophila virilis (Fruit fly)).